A 516-amino-acid chain; its full sequence is 2-isopropylmalate synthase (516 aa).

Residues 5-268 enclose the Pyruvate carboxyltransferase domain; it reads LIIFDTTLRD…DLGIDTTQIV (264 aa). Residues Asp14, His202, His204, and Asn239 each contribute to the Mn(2+) site. A regulatory domain region spans residues 395-516; that stretch reads KFVSLSQHSE…DKLNPQRADI (122 aa).

This sequence belongs to the alpha-IPM synthase/homocitrate synthase family. LeuA type 1 subfamily. As to quaternary structure, homodimer. It depends on Mn(2+) as a cofactor.

It localises to the cytoplasm. The catalysed reaction is 3-methyl-2-oxobutanoate + acetyl-CoA + H2O = (2S)-2-isopropylmalate + CoA + H(+). It participates in amino-acid biosynthesis; L-leucine biosynthesis; L-leucine from 3-methyl-2-oxobutanoate: step 1/4. Catalyzes the condensation of the acetyl group of acetyl-CoA with 3-methyl-2-oxobutanoate (2-ketoisovalerate) to form 3-carboxy-3-hydroxy-4-methylpentanoate (2-isopropylmalate). This is 2-isopropylmalate synthase from Paraburkholderia phymatum (strain DSM 17167 / CIP 108236 / LMG 21445 / STM815) (Burkholderia phymatum).